The primary structure comprises 69 residues: FMRFamide-like neuropeptides 24 (69 aa).

The N-terminal stretch at 1–25 (MLSSRTSSIILILAILVAIMAVAQC) is a signal peptide. Residues 26–51 (RNIQYDVEEMTPEAAFRYAQWGEIPH) constitute a propeptide that is removed on maturation. The residue at position 64 (Phe-64) is a Phenylalanine amide. Residues 68–69 (SI) constitute a propeptide that is removed on maturation.

It belongs to the FARP (FMRFamide related peptide) family.

The protein localises to the secreted. Functionally, probable FMRFamide-like neuropeptides. Plays a role in behaviors associated with a sleep-like state induced by stress (SIS), acting in concert with the FMRFamide related peptide flp-13 and neuropeptide-like protein nlp-8. This is FMRFamide-like neuropeptides 24 from Caenorhabditis elegans.